We begin with the raw amino-acid sequence, 339 residues long: Anthranilate phosphoribosyltransferase (339 aa).

5-phospho-alpha-D-ribose 1-diphosphate contacts are provided by residues Gly79, 82-83 (GD), Ser87, 89-92 (NIST), 107-115 (KHGNRSISS), and Ser119. Gly79 provides a ligand contact to anthranilate. Position 91 (Ser91) interacts with Mg(2+). Asn110 provides a ligand contact to anthranilate. Arg165 is a binding site for anthranilate. Mg(2+) is bound by residues Asp224 and Glu225.

It belongs to the anthranilate phosphoribosyltransferase family. Homodimer. Mg(2+) serves as cofactor.

It catalyses the reaction N-(5-phospho-beta-D-ribosyl)anthranilate + diphosphate = 5-phospho-alpha-D-ribose 1-diphosphate + anthranilate. It participates in amino-acid biosynthesis; L-tryptophan biosynthesis; L-tryptophan from chorismate: step 2/5. Its function is as follows. Catalyzes the transfer of the phosphoribosyl group of 5-phosphorylribose-1-pyrophosphate (PRPP) to anthranilate to yield N-(5'-phosphoribosyl)-anthranilate (PRA). In Listeria monocytogenes serotype 4b (strain CLIP80459), this protein is Anthranilate phosphoribosyltransferase.